The sequence spans 510 residues: Histone deacetylase 3 (510 aa).

A histone deacetylase region spans residues 24–338 (RRVCYFYDPE…WCYETGVALG (315 aa)). His-158 serves as the catalytic Proton donor/acceptor. 3 residues coordinate Zn(2+): Asp-193, His-195, and Asp-281. The tract at residues 394 to 510 (PSVQFQERIP…ARNEPGSSPK (117 aa)) is disordered. Composition is skewed to basic and acidic residues over residues 418 to 434 (DERHDPDSDMVLDDHKP) and 448 to 472 (VKREITETETKDQHGKRLTTEHKGP). The segment covering 485-503 (APTADANAVAVNAPGNARN) has biased composition (low complexity).

The protein belongs to the histone deacetylase family. HD Type 1 subfamily. Requires Zn(2+) as cofactor. Expressed in roots.

Its subcellular location is the nucleus. The enzyme catalyses N(6)-acetyl-L-lysyl-[histone] + H2O = L-lysyl-[histone] + acetate. Functionally, responsible for the deacetylation of lysine residues on the N-terminal part of the core histones (H2A, H2B, H3 and H4). Histone deacetylation gives a tag for epigenetic repression and plays an important role in transcriptional regulation, cell cycle progression and developmental events. Histone deacetylases act via the formation of large multiprotein complexes. This chain is Histone deacetylase 3, found in Oryza sativa subsp. japonica (Rice).